An 858-amino-acid chain; its full sequence is Polyhomeotic-like protein 2 (858 aa).

Disordered regions lie at residues 1-76, 230-307, 337-388, 407-444, 473-493, and 529-561; these read MENE…QYLQ, QQTP…MEGR, PQPS…VALQ, LQCPTANLHKPGGSQQCHPPTPDTGPQNGHPEGVPHTP, KEVAPGEKSVPETRSGPSPHQ, and TDLSSPGMTSGNGNSASSIAGTAPQNGENKPPQ. Composition is skewed to low complexity over residues 10 to 34 and 230 to 241; these read TSSSACATSSTSGASSSSGCNNSSS and QQTPAAAASGPT. The tract at residues 33–53 is interaction with BMI1; sequence SSGGSGRPTGPQISVYSGIPD. Polar residues predominate over residues 265 to 274; sequence PAQSRNTAQA. A compositionally biased stretch (low complexity) spans 337–358; it reads PQPSSKHLQPQFVIQQQPQPQQ. Residues 379–388 are compositionally biased toward polar residues; sequence ASVSPSVALQ. A compositionally biased stretch (basic and acidic residues) spans 473-483; the sequence is KEVAPGEKSVP. The span at 537–551 shows a compositional bias: low complexity; it reads TSGNGNSASSIAGTA. Positions 558 to 587 match the HD1 motif; that stretch reads KPPQAIVKPQILTHVIEGFVIQEGAEPFPV. Glycyl lysine isopeptide (Lys-Gly) (interchain with G-Cter in SUMO2) cross-links involve residues Lys598 and Lys600. At Thr619 the chain carries Phosphothreonine. Position 621 is a phosphoserine (Ser621). A Glycyl lysine isopeptide (Lys-Gly) (interchain with G-Cter in SUMO2) cross-link involves residue Lys632. The FCS-type zinc-finger motif lies at 633 to 667; sequence EEGAPLKLKCELCGRVDFAYKFKRSKRFCSMACAK. 4 residues coordinate Zn(2+): Cys642, Cys645, Cys661, and Cys665. 2 disordered regions span residues 688 to 720 and 732 to 768; these read QKAGAATHNRRRASKASLPPLTKDTKKQPTGTV and HSQEDSSRCSDNSSYEEPLSPISASSSTSRRRQGQRD. A Glycyl lysine isopeptide (Lys-Gly) (interchain with G-Cter in SUMO2) cross-link involves residue Lys702. Ser751 bears the Phosphoserine mark. One can recognise an SAM domain in the interval 794–858; sequence WNVEDVYEFI…YARISMLKDS (65 aa). Lys847 participates in a covalent cross-link: Glycyl lysine isopeptide (Lys-Gly) (interchain with G-Cter in SUMO2).

Component of a PRC1-like complex. Interacts with CBX4. Interacts with BMI1, PCGF2, PHC1 and RNF2. Interacts with CHTOP. Interacts with the N-terminal region of the SP1 transcription factor and with MAPKAPK2. Interacts with SAMD7 and SAMD11.

The protein resides in the nucleus. Functionally, component of a Polycomb group (PcG) multiprotein PRC1-like complex, a complex class required to maintain the transcriptionally repressive state of many genes, including Hox genes, throughout development. PcG PRC1 complex acts via chromatin remodeling and modification of histones; it mediates monoubiquitination of histone H2A 'Lys-119', rendering chromatin heritably changed in its expressibility. The polypeptide is Polyhomeotic-like protein 2 (PHC2) (Homo sapiens (Human)).